We begin with the raw amino-acid sequence, 377 residues long: Probable glucokinase 2 (377 aa).

27–32 (CDVGGS) is an ATP binding site.

It belongs to the bacterial glucokinase family.

It catalyses the reaction D-glucose + ATP = D-glucose 6-phosphate + ADP + H(+). This is Probable glucokinase 2 (GK2) from Trichomonas vaginalis.